The primary structure comprises 336 residues: HTH-type transcriptional repressor PurR (336 aa).

The HTH lacI-type domain maps to 2–56; it reads ATIKDVAKLAGVSTTTVSHVINKTRFVAEDTSKAVWDAIQQLNYSPSAVARSLKV. Positions 4–23 form a DNA-binding region, H-T-H motif; it reads IKDVAKLAGVSTTTVSHVIN. Residues 48–56 mediate DNA binding; sequence SAVARSLKV. Y73, K188, F219, and D273 together coordinate hypoxanthine.

As to quaternary structure, homodimer.

Its pathway is purine metabolism; purine nucleotide biosynthesis [regulation]. Its function is as follows. Is the main repressor of the genes involved in the de novo synthesis of purine nucleotides, regulating purB, purC, purEK, purF, purHD, purL, purMN and guaBA expression. PurR is allosterically activated to bind its cognate DNA by binding the purine corepressors, hypoxanthine or guanine, thereby effecting transcription repression. This is HTH-type transcriptional repressor PurR from Actinobacillus pleuropneumoniae serotype 3 (strain JL03).